The chain runs to 152 residues: 3-hydroxyacyl-[acyl-carrier-protein] dehydratase FabZ (152 aa).

His-58 is an active-site residue.

The protein belongs to the thioester dehydratase family. FabZ subfamily.

It localises to the cytoplasm. The catalysed reaction is a (3R)-hydroxyacyl-[ACP] = a (2E)-enoyl-[ACP] + H2O. Involved in unsaturated fatty acids biosynthesis. Catalyzes the dehydration of short chain beta-hydroxyacyl-ACPs and long chain saturated and unsaturated beta-hydroxyacyl-ACPs. The chain is 3-hydroxyacyl-[acyl-carrier-protein] dehydratase FabZ from Prochlorococcus marinus (strain MIT 9515).